A 199-amino-acid chain; its full sequence is dITP/XTP pyrophosphatase (199 aa).

7–12 (SNNRGK) contacts substrate. Aspartate 68 functions as the Proton acceptor in the catalytic mechanism. Aspartate 68 is a Mg(2+) binding site. Residues alanine 69, 154–157 (FGFD), lysine 177, and 182–183 (HR) contribute to the substrate site.

This sequence belongs to the HAM1 NTPase family. In terms of assembly, homodimer. Mg(2+) serves as cofactor.

It catalyses the reaction XTP + H2O = XMP + diphosphate + H(+). The enzyme catalyses dITP + H2O = dIMP + diphosphate + H(+). The catalysed reaction is ITP + H2O = IMP + diphosphate + H(+). In terms of biological role, pyrophosphatase that catalyzes the hydrolysis of nucleoside triphosphates to their monophosphate derivatives, with a high preference for the non-canonical purine nucleotides XTP (xanthosine triphosphate), dITP (deoxyinosine triphosphate) and ITP. Seems to function as a house-cleaning enzyme that removes non-canonical purine nucleotides from the nucleotide pool, thus preventing their incorporation into DNA/RNA and avoiding chromosomal lesions. This is dITP/XTP pyrophosphatase from Albidiferax ferrireducens (strain ATCC BAA-621 / DSM 15236 / T118) (Rhodoferax ferrireducens).